Reading from the N-terminus, the 370-residue chain is Pulmonary surfactant-associated protein B (370 aa).

The N-terminal stretch at 1 to 24 (MAKSHLPPWLLLLLLPTLCGPGTA) is a signal peptide. Residues 25–184 (VWATSPLACA…PHTQDLSAQR (160 aa)) constitute a propeptide that is removed on maturation. The Saposin A-type domain occupies 26–66 (WATSPLACAQGPEFWCQSLEQALQCKALGHCLQEVWGHVGA). 3 Saposin B-type domains span residues 66 to 148 (ADDL…QPGS), 188 to 265 (PLPL…SSVD), and 284 to 359 (QDPE…VATL). 9 disulfides stabilise this stretch: C70-C144, C73-C138, C101-C113, C192-C261, C195-C255, C219-C230, C288-C355, C291-C349, and C314-C324. A propeptide spanning residues 264 to 370 (VDSIGQVPPT…PLQCIQSPHF (107 aa)) is cleaved from the precursor. N300 is a glycosylation site (N-linked (GlcNAc...) asparagine).

In terms of assembly, homodimer; disulfide-linked.

The protein resides in the secreted. It is found in the extracellular space. Its subcellular location is the surface film. Functionally, pulmonary surfactant-associated proteins promote alveolar stability by lowering the surface tension at the air-liquid interface in the peripheral air spaces. SP-B increases the collapse pressure of palmitic acid to nearly 70 millinewtons per meter. This chain is Pulmonary surfactant-associated protein B (SFTPB), found in Oryctolagus cuniculus (Rabbit).